A 94-amino-acid chain; its full sequence is Co-chaperonin GroES (94 aa).

It belongs to the GroES chaperonin family. In terms of assembly, heptamer of 7 subunits arranged in a ring. Interacts with the chaperonin GroEL.

The protein resides in the cytoplasm. Together with the chaperonin GroEL, plays an essential role in assisting protein folding. The GroEL-GroES system forms a nano-cage that allows encapsulation of the non-native substrate proteins and provides a physical environment optimized to promote and accelerate protein folding. GroES binds to the apical surface of the GroEL ring, thereby capping the opening of the GroEL channel. This chain is Co-chaperonin GroES, found in Lactobacillus acidophilus (strain ATCC 700396 / NCK56 / N2 / NCFM).